The primary structure comprises 341 residues: Ribosomal RNA small subunit methyltransferase H (341 aa).

S-adenosyl-L-methionine contacts are provided by residues 47–49 (GGY), D64, F97, D109, and Q116.

The protein belongs to the methyltransferase superfamily. RsmH family.

The protein resides in the cytoplasm. It catalyses the reaction cytidine(1402) in 16S rRNA + S-adenosyl-L-methionine = N(4)-methylcytidine(1402) in 16S rRNA + S-adenosyl-L-homocysteine + H(+). Functionally, specifically methylates the N4 position of cytidine in position 1402 (C1402) of 16S rRNA. The protein is Ribosomal RNA small subunit methyltransferase H of Allorhizobium ampelinum (strain ATCC BAA-846 / DSM 112012 / S4) (Agrobacterium vitis (strain S4)).